A 656-amino-acid polypeptide reads, in one-letter code: Protein NO VEIN-LIKE (656 aa).

The segment at 283-375 (DKDYCGKHTR…HVKQKIPKSA (93 aa)) is disordered. The segment covering 299-308 (EENDSADYEV) has biased composition (acidic residues). The span at 342-353 (ESRNHEKSDSPK) shows a compositional bias: basic and acidic residues. Basic residues predominate over residues 354–371 (LLRRGPSKLRRGHVKQKI).

The chain is Protein NO VEIN-LIKE from Arabidopsis thaliana (Mouse-ear cress).